The primary structure comprises 554 residues: MASHPAHRSSKAADEELPKASSTFHPSLWGSFFLTYQPPTAPQRANMKERAEVLRERVRKVLKGSTTDQLPETVNLILTLQRLGLGYYYENEIDKLLHQIYSNSDYNVKDLNLVSQRFYLLRKNGYDVPSDVFLSFKTEEGGFACAAADTRSLLSLYNAAYLRKHGEEVLDEAISSTRLRLQDLLGRLLPESPFAKEVSSSLRTPLFRRVGILEARNYIPIYETEATRNEAVLELAKLNFNLQQLDFCEELKHCSAWWNEMIAKSKLTFVRDRIVEEYFWMNGACYDPPYSLSRIILTKITGLITIIDDMFDTHGTTEDCMKFAEAFGRWDESAIHLLPEYMKDFYILMLETFQSFEDALGPEKSYRVLYLKQAMERLVELYSKEIKWRDDDYVPTMSEHLQVSAETIATIALTCSAYAGMGDMSIRKETFEWALSFPQFIRTFGSFVRLSNDVVSTKREQTKDHSPSTVHCYMKEHGTTMDDACEKIKELIEDSWKDMLEQSLALKGLPKVVPQLVFDFSRTTDNMYRDRDALTSSEALKEMIQLLFVEPIPE.

Residues Asp308 and Asp312 each coordinate Mg(2+). Residues Asp308, Asp312, Arg449, and Asn452 each contribute to the substrate site. The DDXXD motif motif lies at 308 to 312; that stretch reads DDMFD. The Mg(2+) site is built by Asn452, Ser456, and Glu460.

This sequence belongs to the terpene synthase family. Monomer. Mg(2+) is required as a cofactor. Requires Mn(2+) as cofactor. In terms of tissue distribution, highly expressed in the husk. Detected in leaf sheaths and leaves.

It is found in the cytoplasm. The catalysed reaction is (2E,6E)-farnesyl diphosphate = 7-epi-sesquithujene + diphosphate. It carries out the reaction (2E,6E)-farnesyl diphosphate = (1S,5S,6R)-alpha-bergamotene + diphosphate. The enzyme catalyses (2E,6E)-farnesyl diphosphate = (E)-beta-farnesene + diphosphate. It catalyses the reaction (2E,6E)-farnesyl diphosphate = (S)-beta-bisabolene + diphosphate. The catalysed reaction is (2Z,6E)-farnesyl diphosphate = (-)-beta-curcumene + diphosphate. It carries out the reaction (2E,6E)-farnesyl diphosphate = gamma-curcumene + diphosphate. The enzyme catalyses (2E,6E)-farnesyl diphosphate = sesquisabinene A + diphosphate. It functions in the pathway secondary metabolite biosynthesis; terpenoid biosynthesis. Sesquiterpene synthase involved in the production after herbivore attack of a blend of volatiles that attracts natural enemies of herbivores. Converts farnesyl diphosphate to (S)-beta-bisabolene and 7-epi-sesquithujene, along with a mixture of more than 20 other minor sesquiterpene olefins. Can also act in vitro as a monoterpene synthase, converting geranyl diphosphate to (S)-(-)-limonene, beta-myrcene and 11 other monoterpenes. This is 7-epi-sesquithujene synthase from Zea mays (Maize).